A 379-amino-acid chain; its full sequence is Anhydro-N-acetylmuramic acid kinase (379 aa).

9 to 16 is a binding site for ATP; the sequence is GTSADGVD.

Belongs to the anhydro-N-acetylmuramic acid kinase family.

It catalyses the reaction 1,6-anhydro-N-acetyl-beta-muramate + ATP + H2O = N-acetyl-D-muramate 6-phosphate + ADP + H(+). It participates in amino-sugar metabolism; 1,6-anhydro-N-acetylmuramate degradation. Its pathway is cell wall biogenesis; peptidoglycan recycling. Its function is as follows. Catalyzes the specific phosphorylation of 1,6-anhydro-N-acetylmuramic acid (anhMurNAc) with the simultaneous cleavage of the 1,6-anhydro ring, generating MurNAc-6-P. Is required for the utilization of anhMurNAc either imported from the medium or derived from its own cell wall murein, and thus plays a role in cell wall recycling. The protein is Anhydro-N-acetylmuramic acid kinase of Prochlorococcus marinus (strain MIT 9313).